We begin with the raw amino-acid sequence, 2273 residues long: Acetyl-CoA carboxylase, mitochondrial (2273 aa).

A mitochondrion-targeting transit peptide spans 1-104; sequence KGKTITHGQS…RGNIHKHTRL (104 aa). In terms of domain architecture, Biotin carboxylation spans 134 to 635; it reads VISKILIANN…STGWLDDLIL (502 aa). In terms of domain architecture, ATP-grasp spans 292 to 484; the sequence is KTNFVSVPDD…LPATQLQIAM (193 aa). 332–337 contacts ATP; the sequence is GGGGKG. Arg-459 is a catalytic residue. The region spanning 763–837 is the Biotinyl-binding domain; sequence LEAELNPTQV…EAGDVIAKLT (75 aa). An N6-biotinyllysine modification is found at Lys-804. One can recognise a CoA carboxyltransferase N-terminal domain in the interval 1532–1867; that stretch reads PYSVKDWLQP…KRDMSPPLLE (336 aa). The interval 1532 to 2187 is carboxyltransferase; it reads PYSVKDWLQP…EGQVIKRLQK (656 aa). Residues Arg-1776, Lys-2080, and Arg-2082 each coordinate CoA. A CoA carboxyltransferase C-terminal domain is found at 1871 to 2187; sequence RWDRDVDFKP…EGQVIKRLQK (317 aa).

The cofactor is biotin.

Its subcellular location is the mitochondrion. The enzyme catalyses hydrogencarbonate + acetyl-CoA + ATP = malonyl-CoA + ADP + phosphate + H(+). It carries out the reaction N(6)-biotinyl-L-lysyl-[protein] + hydrogencarbonate + ATP = N(6)-carboxybiotinyl-L-lysyl-[protein] + ADP + phosphate + H(+). The protein operates within lipid metabolism; malonyl-CoA biosynthesis; malonyl-CoA from acetyl-CoA: step 1/1. In terms of biological role, catalyzes the rate-limiting reaction in the mitochondrial fatty acid synthesis (FAS) type II pathway. Responsible for the production of the mitochondrial malonyl-CoA, used for the biosynthesis of the cofactor lipoic acid. This protein carries three functions: biotin carboxyl carrier protein, biotin carboxylase, and carboxyltransferase. This chain is Acetyl-CoA carboxylase, mitochondrial (HFA1), found in Saccharomyces cerevisiae (strain JAY291) (Baker's yeast).